A 414-amino-acid polypeptide reads, in one-letter code: Translation initiation factor 2 subunit gamma (414 aa).

A tr-type G domain is found at 8 to 206; the sequence is QPEVNIGVVG…AIEKFIPTPP (199 aa). A G1 region spans residues 17–24; sequence GHVDHGKT. 4 residues coordinate Mg(2+): Asp-20, Thr-24, Gly-45, and Thr-47. 20–25 provides a ligand contact to GTP; sequence DHGKTT. Residues 45-49 are G2; that stretch reads GMTIK. Positions 60, 63, 75, and 77 each coordinate Zn(2+). The G3 stretch occupies residues 93–96; the sequence is DAPG. GTP contacts are provided by residues 149–152 and 184–186; these read NKVD and SAL. The G4 stretch occupies residues 149 to 152; sequence NKVD. The tract at residues 184–186 is G5; the sequence is SAL.

This sequence belongs to the TRAFAC class translation factor GTPase superfamily. Classic translation factor GTPase family. EIF2G subfamily. In terms of assembly, heterotrimer composed of an alpha, a beta and a gamma chain. Requires Mg(2+) as cofactor.

It catalyses the reaction GTP + H2O = GDP + phosphate + H(+). Functionally, eIF-2 functions in the early steps of protein synthesis by forming a ternary complex with GTP and initiator tRNA. The polypeptide is Translation initiation factor 2 subunit gamma (Aeropyrum pernix (strain ATCC 700893 / DSM 11879 / JCM 9820 / NBRC 100138 / K1)).